The chain runs to 364 residues: S-adenosylmethionine:tRNA ribosyltransferase-isomerase (364 aa).

This sequence belongs to the QueA family. Monomer.

Its subcellular location is the cytoplasm. It catalyses the reaction 7-aminomethyl-7-carbaguanosine(34) in tRNA + S-adenosyl-L-methionine = epoxyqueuosine(34) in tRNA + adenine + L-methionine + 2 H(+). It functions in the pathway tRNA modification; tRNA-queuosine biosynthesis. Functionally, transfers and isomerizes the ribose moiety from AdoMet to the 7-aminomethyl group of 7-deazaguanine (preQ1-tRNA) to give epoxyqueuosine (oQ-tRNA). In Bradyrhizobium sp. (strain BTAi1 / ATCC BAA-1182), this protein is S-adenosylmethionine:tRNA ribosyltransferase-isomerase.